A 648-amino-acid chain; its full sequence is 5-aminolevulinate synthase, mitochondrial (648 aa).

The transit peptide at 1 to 26 (MEALLQQSRAMCPFLKRSSPNTLRSL) directs the protein to the mitochondrion. The interval 69 to 109 (KRFTSSAAGVPGAGAGTPKPTRGSPGKRALHSTGGNGANMS) is disordered. Substrate contacts are provided by Arg170, Ser283, and Lys302. Pyridoxal 5'-phosphate is bound by residues Ser335, His363, and Thr409. Lys412 is an active-site residue. At Lys412 the chain carries N6-(pyridoxal phosphate)lysine. Residues Thr441 and Thr442 each coordinate pyridoxal 5'-phosphate. A substrate-binding site is contributed by Thr527.

It belongs to the class-II pyridoxal-phosphate-dependent aminotransferase family. Homodimer. Pyridoxal 5'-phosphate is required as a cofactor.

The protein resides in the mitochondrion matrix. It catalyses the reaction succinyl-CoA + glycine + H(+) = 5-aminolevulinate + CO2 + CoA. It functions in the pathway porphyrin-containing compound metabolism; protoporphyrin-IX biosynthesis; 5-aminolevulinate from glycine: step 1/1. Catalyzes the synthesis of 5-aminolevulinate (ALA) from succinyl-CoA and glycine, the first and rate-limiting step in heme biosynthesis. In Emericella nidulans (strain FGSC A4 / ATCC 38163 / CBS 112.46 / NRRL 194 / M139) (Aspergillus nidulans), this protein is 5-aminolevulinate synthase, mitochondrial (hemA).